The chain runs to 124 residues: Non-specific lipid-transfer protein (124 aa).

Positions 1–26 are cleaved as a signal peptide; that stretch reads MANSGVMKLVCLVLACMVVAAPLAEA. 4 disulfide bridges follow: Cys-30–Cys-77, Cys-40–Cys-54, Cys-55–Cys-100, and Cys-75–Cys-114.

Belongs to the plant LTP family.

In terms of biological role, plant non-specific lipid-transfer proteins transfer phospholipids as well as galactolipids across membranes. May play a role in wax or cutin deposition in the cell walls of expanding epidermal cells and certain secretory tissues. The sequence is that of Non-specific lipid-transfer protein from Macadamia integrifolia (Macadamia nut).